The chain runs to 830 residues: Mitochondrial escape protein 2 (830 aa).

The transit peptide at 1 to 41 directs the protein to the mitochondrion; the sequence is MYRSGLLTSGGGSAALTALRAIGSRSSLSNGKFIWNVGKRF. Topologically, residues 42–283 are mitochondrial matrix; it reads ITSEIQEKDQ…ISNFFVNHTR (242 aa). One can recognise an RRM domain in the interval 197–268; the sequence is IKVLFQGPPL…TVLHIQYQQE (72 aa). Residues 284-304 traverse the membrane as a helical segment; that stretch reads IAIPVMLAVLSIIAVLIFDPI. The Mitochondrial intermembrane segment spans residues 305–830; that stretch reads REFSIEQKIT…ALSERKQNQK (526 aa).

The protein belongs to the YME2 family.

It is found in the mitochondrion inner membrane. In terms of biological role, plays a role in maintaining the mitochondrial genome and in controlling the mtDNA escape. Involved in the regulation of mtDNA nucleotide structure and number. May have a dispensable role in early maturation of pre-rRNA. The polypeptide is Mitochondrial escape protein 2 (YME2) (Vanderwaltozyma polyspora (strain ATCC 22028 / DSM 70294 / BCRC 21397 / CBS 2163 / NBRC 10782 / NRRL Y-8283 / UCD 57-17) (Kluyveromyces polysporus)).